Consider the following 222-residue polypeptide: Large ribosomal subunit protein uL4 (222 aa).

This sequence belongs to the universal ribosomal protein uL4 family. As to quaternary structure, part of the 50S ribosomal subunit.

In terms of biological role, one of the primary rRNA binding proteins, this protein initially binds near the 5'-end of the 23S rRNA. It is important during the early stages of 50S assembly. It makes multiple contacts with different domains of the 23S rRNA in the assembled 50S subunit and ribosome. Functionally, forms part of the polypeptide exit tunnel. The chain is Large ribosomal subunit protein uL4 from Acidobacterium capsulatum (strain ATCC 51196 / DSM 11244 / BCRC 80197 / JCM 7670 / NBRC 15755 / NCIMB 13165 / 161).